The sequence spans 198 residues: Glycerol-3-phosphate acyltransferase 2 (198 aa).

The next 4 membrane-spanning stretches (helical) occupy residues 4–24, 71–91, 113–133, and 147–167; these read TYLLFIVAYLLGSIPFALVVG, LPIIFALDIHPLWFGLAAVLG, LLCYSPVVFAILAVVFFSLLF, and VVAVIASIVSGDKIFIIAMCL.

It belongs to the PlsY family. In terms of assembly, probably interacts with PlsX.

Its subcellular location is the cell membrane. The enzyme catalyses an acyl phosphate + sn-glycerol 3-phosphate = a 1-acyl-sn-glycero-3-phosphate + phosphate. The protein operates within lipid metabolism; phospholipid metabolism. Its function is as follows. Catalyzes the transfer of an acyl group from acyl-phosphate (acyl-PO(4)) to glycerol-3-phosphate (G3P) to form lysophosphatidic acid (LPA). This enzyme utilizes acyl-phosphate as fatty acyl donor, but not acyl-CoA or acyl-ACP. The chain is Glycerol-3-phosphate acyltransferase 2 from Bacillus cereus (strain ATCC 10987 / NRS 248).